Reading from the N-terminus, the 142-residue chain is Large ribosomal subunit protein uL11 (142 aa).

This sequence belongs to the universal ribosomal protein uL11 family. As to quaternary structure, part of the ribosomal stalk of the 50S ribosomal subunit. Interacts with L10 and the large rRNA to form the base of the stalk. L10 forms an elongated spine to which L12 dimers bind in a sequential fashion forming a multimeric L10(L12)X complex. In terms of processing, one or more lysine residues are methylated.

Forms part of the ribosomal stalk which helps the ribosome interact with GTP-bound translation factors. The polypeptide is Large ribosomal subunit protein uL11 (Mycobacterium sp. (strain JLS)).